We begin with the raw amino-acid sequence, 613 residues long: Protein translocase subunit SecD (613 aa).

Transmembrane regions (helical) follow at residues 10-30 (ALVVAVAILSIYQLVPSWFYF), 452-472 (KGTLAALVGLALVVVFMVVYY), 477-497 (LVADVALALNGLLVLAVMSMI), 503-523 (LPGIAGFVLTLGMAVDANVLI), 548-568 (VFWTIVDSHVTTLVAGVVLFQ), and 576-596 (GFAVTLIIGLVASMFTSIVVT).

It belongs to the SecD/SecF family. SecD subfamily. Forms a complex with SecF. Part of the essential Sec protein translocation apparatus which comprises SecA, SecYEG and auxiliary proteins SecDF-YajC and YidC.

Its subcellular location is the cell inner membrane. Its function is as follows. Part of the Sec protein translocase complex. Interacts with the SecYEG preprotein conducting channel. SecDF uses the proton motive force (PMF) to complete protein translocation after the ATP-dependent function of SecA. The polypeptide is Protein translocase subunit SecD (Anaeromyxobacter dehalogenans (strain 2CP-C)).